The primary structure comprises 435 residues: Arginine biosynthesis bifunctional protein ArgJ, mitochondrial (435 aa).

Threonine 167, lysine 193, threonine 204, glutamate 291, asparagine 430, and threonine 435 together coordinate substrate. The Nucleophile role is filled by threonine 204.

It belongs to the ArgJ family. Heterodimer of an alpha and a beta chain. Post-translationally, the alpha and beta chains are autoproteolytically processed from a single precursor protein within the mitochondrion.

The protein localises to the mitochondrion matrix. The enzyme catalyses N(2)-acetyl-L-ornithine + L-glutamate = N-acetyl-L-glutamate + L-ornithine. The catalysed reaction is L-glutamate + acetyl-CoA = N-acetyl-L-glutamate + CoA + H(+). It participates in amino-acid biosynthesis; L-arginine biosynthesis; L-ornithine and N-acetyl-L-glutamate from L-glutamate and N(2)-acetyl-L-ornithine (cyclic): step 1/1. The protein operates within amino-acid biosynthesis; L-arginine biosynthesis; N(2)-acetyl-L-ornithine from L-glutamate: step 1/4. In terms of biological role, catalyzes two activities which are involved in the cyclic version of arginine biosynthesis: the synthesis of acetylglutamate from glutamate and acetyl-CoA, and of ornithine by transacetylation between acetylornithine and glutamate. The sequence is that of Arginine biosynthesis bifunctional protein ArgJ, mitochondrial from Heterostelium pallidum (strain ATCC 26659 / Pp 5 / PN500) (Cellular slime mold).